The following is an 80-amino-acid chain: SPI-1 type 3 secretion system needle filament protein (80 aa).

It belongs to the SctF family. As to quaternary structure, the core secretion machinery of the T3SS is composed of approximately 20 different proteins, including cytoplasmic components, a base, an export apparatus and a needle. This subunit polymerizes and forms the helical needle filament. Interacts with the needle tip protein SipD/SctA. Interacts with the needle adapter protein PrgJ/SctI, the secretin InvG/SctC and the minor export apparatus protein SpaP/SctR. In vitro, the needle protomer refolds spontaneously to extend the needle from the distal end.

Its subcellular location is the secreted. The protein resides in the cell surface. Its activity is regulated as follows. Binding of bile salts, including deoxycholate, to the PrgI:SipD interface may inhibit the T3SS function. In terms of biological role, component of the type III secretion system (T3SS), also called injectisome, which is used to inject bacterial effector proteins into eukaryotic host cells. PrgI/SctF1 forms the external needle filament that protrudes from the bacterial surface. Is probably involved in the transduction of an activating signal, thought to be mediated by the distal tip of the needle filament, to the secretion machine. Required for invasion of epithelial cells. Required for the secretion of the effector protein SptP. Its function is as follows. During infection, can induce innate immune responses. The needle proteins interact with host TLR2 or TLR4, and induce signaling by NF-kappa-B and/or AP-1. This activation is MyD88 dependent and results in increased expression of cytokines, including TNF-alpha, IL-6 and IL-8. This is SPI-1 type 3 secretion system needle filament protein from Salmonella typhimurium (strain LT2 / SGSC1412 / ATCC 700720).